A 144-amino-acid polypeptide reads, in one-letter code: Transcription antitermination protein NusB (144 aa).

This sequence belongs to the NusB family.

In terms of biological role, involved in transcription antitermination. Required for transcription of ribosomal RNA (rRNA) genes. Binds specifically to the boxA antiterminator sequence of the ribosomal RNA (rrn) operons. This is Transcription antitermination protein NusB from Carboxydothermus hydrogenoformans (strain ATCC BAA-161 / DSM 6008 / Z-2901).